An 882-amino-acid chain; its full sequence is ABC transporter H family member 4 (882 aa).

Helical transmembrane passes span tryptophan 4 to phenylalanine 24, leucine 35 to tryptophan 55, and threonine 79 to leucine 101. The region spanning phenylalanine 384–glycine 863 is the ABC transporter domain. Glycine 418–serine 425 contributes to the ATP binding site. Disordered stretches follow at residues phenylalanine 522–isoleucine 617, serine 634–valine 669, and asparagine 710–serine 730. Composition is skewed to low complexity over residues isoleucine 528–isoleucine 617 and asparagine 647–serine 667. Over residues aspartate 715 to alanine 724 the composition is skewed to acidic residues.

It belongs to the ABC transporter superfamily. ABCH family.

The protein resides in the membrane. This is ABC transporter H family member 4 (abcH4) from Dictyostelium discoideum (Social amoeba).